The following is a 92-amino-acid chain: UPF0213 protein MGAS9429_Spy1198 (92 aa).

Positions K4–A80 constitute a GIY-YIG domain.

The protein belongs to the UPF0213 family.

The polypeptide is UPF0213 protein MGAS9429_Spy1198 (Streptococcus pyogenes serotype M12 (strain MGAS9429)).